Consider the following 327-residue polypeptide: Replication factor C small subunit (327 aa).

Residue 47–54 coordinates ATP; it reads GPPGTGKT.

The protein belongs to the activator 1 small subunits family. RfcS subfamily. In terms of assembly, heteromultimer composed of small subunits (RfcS) and large subunits (RfcL).

Functionally, part of the RFC clamp loader complex which loads the PCNA sliding clamp onto DNA. In Sulfurisphaera tokodaii (strain DSM 16993 / JCM 10545 / NBRC 100140 / 7) (Sulfolobus tokodaii), this protein is Replication factor C small subunit.